Reading from the N-terminus, the 224-residue chain is Deoxyribose-phosphate aldolase (224 aa).

The active-site Proton donor/acceptor is Asp-92. Lys-155 (schiff-base intermediate with acetaldehyde) is an active-site residue. Lys-184 acts as the Proton donor/acceptor in catalysis.

Belongs to the DeoC/FbaB aldolase family. DeoC type 1 subfamily.

The protein resides in the cytoplasm. The catalysed reaction is 2-deoxy-D-ribose 5-phosphate = D-glyceraldehyde 3-phosphate + acetaldehyde. It functions in the pathway carbohydrate degradation; 2-deoxy-D-ribose 1-phosphate degradation; D-glyceraldehyde 3-phosphate and acetaldehyde from 2-deoxy-alpha-D-ribose 1-phosphate: step 2/2. Catalyzes a reversible aldol reaction between acetaldehyde and D-glyceraldehyde 3-phosphate to generate 2-deoxy-D-ribose 5-phosphate. The protein is Deoxyribose-phosphate aldolase of Clostridium perfringens (strain SM101 / Type A).